A 362-amino-acid polypeptide reads, in one-letter code: B3 domain-containing protein IDEF1 (362 aa).

The tract at residues Val-30–Ala-91 is disordered. The span at Pro-48–Asn-70 shows a compositional bias: basic residues. Positions Leu-253–Ile-355 form a DNA-binding region, TF-B3.

Post-translationally, polyubiquitinated. Ubiquitination leads to its subsequent degradation via the proteasome pathway. As to expression, expressed in roots.

It localises to the nucleus. In terms of biological role, transcription regulator involved in iron deficiency response and tolerance. May regulate directly iron transporters or other transcription factors involved in iron-deficiency response. Binds specifically to the DNA sequence 5'-CATGC-3' of the IDE1 element found in the promoter of the barley iron deficiency-inducible gene IDS2. The chain is B3 domain-containing protein IDEF1 (IDEF1) from Oryza sativa subsp. japonica (Rice).